Reading from the N-terminus, the 61-residue chain is Protein MATERNALLY EXPRESSED GENE 6 (61 aa).

Cys38 and Cys60 are oxidised to a cystine.

The protein belongs to the MEG family. In terms of tissue distribution, ubiquitous.

The chain is Protein MATERNALLY EXPRESSED GENE 6 (MEG6) from Zea mays (Maize).